We begin with the raw amino-acid sequence, 586 residues long: Laccase-9 (586 aa).

The first 25 residues, 1-25 (MPRVHHSLSNQAFLVLLLFSSIASA), serve as a signal peptide directing secretion. Plastocyanin-like domains lie at 33–149 (HVKD…PRSG) and 159–307 (KEVP…YEGA). N-linked (GlcNAc...) asparagine glycans are attached at residues Asn52, Asn74, and Asn79. Cu cation is bound by residues His83 and His85. N-linked (GlcNAc...) asparagine glycosylation occurs at Asn111. Cu cation-binding residues include His128 and His130. N-linked (GlcNAc...) asparagine glycans are attached at residues Asn236, Asn333, Asn385, Asn403, and Asn451. A Plastocyanin-like 3 domain is found at 411–552 (DFPDQPPLKF…MMAFIVQNGP (142 aa)). Positions 469, 472, 474, 531, 532, 533, and 537 each coordinate Cu cation.

It belongs to the multicopper oxidase family. Cu cation is required as a cofactor. As to expression, predominantly expressed in roots.

The protein localises to the secreted. The protein resides in the extracellular space. Its subcellular location is the apoplast. The enzyme catalyses 4 hydroquinone + O2 = 4 benzosemiquinone + 2 H2O. Lignin degradation and detoxification of lignin-derived products. The polypeptide is Laccase-9 (LAC9) (Arabidopsis thaliana (Mouse-ear cress)).